The following is a 182-amino-acid chain: Adenine phosphoribosyltransferase (182 aa).

Belongs to the purine/pyrimidine phosphoribosyltransferase family. As to quaternary structure, homodimer.

The protein resides in the cytoplasm. It carries out the reaction AMP + diphosphate = 5-phospho-alpha-D-ribose 1-diphosphate + adenine. The protein operates within purine metabolism; AMP biosynthesis via salvage pathway; AMP from adenine: step 1/1. Its function is as follows. Catalyzes a salvage reaction resulting in the formation of AMP, that is energically less costly than de novo synthesis. The protein is Adenine phosphoribosyltransferase of Sulfurimonas denitrificans (strain ATCC 33889 / DSM 1251) (Thiomicrospira denitrificans (strain ATCC 33889 / DSM 1251)).